A 240-amino-acid chain; its full sequence is MNQNSEGCMKKISSVNLDKLINDFSQIEKKMIESSGKNNILDMQLEKANCLLRVMQTKEVAMKQGENEQLKRNADLMKEKFKMHEQEHRNNIAKLMSEMKIKEEGHKIEKTKLYQDMQKKVKLSEEKNKELIEKKELEISELNAKLRTQEREKQNEMIKLQLEFDAKLARVQIKTKSYPDSTVSPHSIYKRKLQHLQEEKDKEIAVLRNTVRDLEQRLSVSKDSQVKLVGKDPRFKRRRF.

Positions 55–223 form a coiled coil; it reads MQTKEVAMKQ…LEQRLSVSKD (169 aa).

This chain is Coiled-coil domain-containing protein 152 (CCDC152), found in Bos taurus (Bovine).